The chain runs to 350 residues: tRNA uridine(34) hydroxylase (350 aa).

Residues 146–240 form the Rhodanese domain; it reads DDPDALFIDM…YARKAREQGL (95 aa). Cys-200 acts as the Cysteine persulfide intermediate in catalysis.

It belongs to the TrhO family.

The enzyme catalyses uridine(34) in tRNA + AH2 + O2 = 5-hydroxyuridine(34) in tRNA + A + H2O. Functionally, catalyzes oxygen-dependent 5-hydroxyuridine (ho5U) modification at position 34 in tRNAs, the first step in 5-carboxymethoxyuridine (cmo5U) biosynthesis. May be part of an alternate pathway, which is able to bypass cmo5U biogenesis in a subset of tRNAs under aerobic conditions. The sequence is that of tRNA uridine(34) hydroxylase from Escherichia coli O17:K52:H18 (strain UMN026 / ExPEC).